The primary structure comprises 153 residues: MKHIEIYTDGSCLGNPGPGGYGAVLLFNQHSKELSQGFVHTTNNRMELLATIEALASLTETCKVDLTTDSQYVKNGINQWIKNWRKNGWRTSDKKPVKNVDLWKRLDEQVGRHDVKWHWVKGHSGHPMNERCDVLARDAASGKSLLPDEGFQG.

Residues 1–141 (MKHIEIYTDG…CDVLARDAAS (141 aa)) form the RNase H type-1 domain. Residues D9, E47, D69, and D133 each contribute to the Mg(2+) site.

It belongs to the RNase H family. Monomer. Mg(2+) serves as cofactor.

The protein resides in the cytoplasm. The catalysed reaction is Endonucleolytic cleavage to 5'-phosphomonoester.. Its function is as follows. Endonuclease that specifically degrades the RNA of RNA-DNA hybrids. This Pseudoalteromonas atlantica (strain T6c / ATCC BAA-1087) protein is Ribonuclease H.